Here is a 55-residue protein sequence, read N- to C-terminus: Large ribosomal subunit protein bL33 (55 aa).

It belongs to the bacterial ribosomal protein bL33 family.

The protein is Large ribosomal subunit protein bL33 of Hamiltonella defensa subsp. Acyrthosiphon pisum (strain 5AT).